Reading from the N-terminus, the 445-residue chain is Probable multidrug resistance protein YpnP (445 aa).

A run of 12 helical transmembrane segments spans residues 15 to 35 (LVLF…FQFI), 49 to 69 (LGAA…ILGL), 95 to 115 (AFVV…FFLS), 136 to 156 (LQIQ…STVL), 168 to 188 (FIAF…SVFR), 194 to 214 (AAYS…FYVI), 240 to 260 (IPAG…MSVV), 277 to 297 (LDSI…SMAG), 314 to 334 (LGVI…WVFG), 355 to 375 (LKWI…NGIV), 384 to 404 (VLVL…ALFS), and 411 to 431 (GIGL…FLYY).

This sequence belongs to the multi antimicrobial extrusion (MATE) (TC 2.A.66.1) family.

It is found in the cell membrane. This Bacillus subtilis (strain 168) protein is Probable multidrug resistance protein YpnP (ypnP).